Consider the following 159-residue polypeptide: 6,7-dimethyl-8-ribityllumazine synthase (159 aa).

Residues Trp-26, 58–60 (SFE), and 80–82 (VVI) each bind 5-amino-6-(D-ribitylamino)uracil. 85–86 (GT) is a (2S)-2-hydroxy-3-oxobutyl phosphate binding site. His-88 acts as the Proton donor in catalysis. Phe-113 is a 5-amino-6-(D-ribitylamino)uracil binding site. Position 127 (Arg-127) interacts with (2S)-2-hydroxy-3-oxobutyl phosphate.

It belongs to the DMRL synthase family.

It carries out the reaction (2S)-2-hydroxy-3-oxobutyl phosphate + 5-amino-6-(D-ribitylamino)uracil = 6,7-dimethyl-8-(1-D-ribityl)lumazine + phosphate + 2 H2O + H(+). It functions in the pathway cofactor biosynthesis; riboflavin biosynthesis; riboflavin from 2-hydroxy-3-oxobutyl phosphate and 5-amino-6-(D-ribitylamino)uracil: step 1/2. Its function is as follows. Catalyzes the formation of 6,7-dimethyl-8-ribityllumazine by condensation of 5-amino-6-(D-ribitylamino)uracil with 3,4-dihydroxy-2-butanone 4-phosphate. This is the penultimate step in the biosynthesis of riboflavin. The protein is 6,7-dimethyl-8-ribityllumazine synthase of Renibacterium salmoninarum (strain ATCC 33209 / DSM 20767 / JCM 11484 / NBRC 15589 / NCIMB 2235).